A 529-amino-acid chain; its full sequence is MDALALWQHYQDWLYYHPELEFYVDVSRMGLTPEVVHRLEPAFERAFEQMKELEAGAIANPDEGRMVGHYWLRDPDLAPSPELRSQIRDAIAQVKQFSQQVHSGAIAPPQGGHFTEILSIGIGGSALGPQFVAAALAPVHPPLNIHFLDNTDPAGFERVFAELGDRLRTTLVLVISKSGGTPETRNGMLEAQARFQRAGLAFADHAVAVTLPGSGLAQVAESNGWLAIFPMFDWVGGRTSELSTVGLLPAALQGIDIDDLLMGAKLMDQATRVPNIRQNPAALLALAWHHAGKGRGEKDMVILPYKDSLLLFSRYLQQLVMESLGKETDLNGNIVHQGIAVYGNKGTTDQHAYVQQLRDGLPNFFVTFIEVLRDGQEPSIEVEPGITAGDYLSGLLLGTRQALYEKNRPSLTVTIPEVTPKTVGALIALYERAVGLYGFLVNINAYHQPGVEAGKKAAAANLALQRQIVKVLEQSDEPLDLGAIAGAINAPDQLERIYLILRHLAANDRGIEQLGDPAQPSQLQFRWQR.

Catalysis depends on Glu322, which acts as the Proton donor. Catalysis depends on residues His351 and Lys455.

The protein belongs to the GPI family.

Its subcellular location is the cytoplasm. It catalyses the reaction alpha-D-glucose 6-phosphate = beta-D-fructose 6-phosphate. The protein operates within carbohydrate biosynthesis; gluconeogenesis. It participates in carbohydrate degradation; glycolysis; D-glyceraldehyde 3-phosphate and glycerone phosphate from D-glucose: step 2/4. Functionally, catalyzes the reversible isomerization of glucose-6-phosphate to fructose-6-phosphate. This is Glucose-6-phosphate isomerase from Thermosynechococcus vestitus (strain NIES-2133 / IAM M-273 / BP-1).